Consider the following 432-residue polypeptide: 3-phosphoshikimate 1-carboxyvinyltransferase (432 aa).

Lys-22, Ser-23, and Arg-27 together coordinate 3-phosphoshikimate. Lys-22 contributes to the phosphoenolpyruvate binding site. Residues Gly-96 and Arg-127 each coordinate phosphoenolpyruvate. Residues Ser-173, Ser-174, Gln-175, Ser-201, Asp-316, Asn-339, and Lys-343 each coordinate 3-phosphoshikimate. Gln-175 is a phosphoenolpyruvate binding site. Asp-316 acts as the Proton acceptor in catalysis. Phosphoenolpyruvate is bound by residues Arg-347, Arg-391, and Lys-416.

This sequence belongs to the EPSP synthase family. Monomer.

The protein localises to the cytoplasm. It carries out the reaction 3-phosphoshikimate + phosphoenolpyruvate = 5-O-(1-carboxyvinyl)-3-phosphoshikimate + phosphate. It participates in metabolic intermediate biosynthesis; chorismate biosynthesis; chorismate from D-erythrose 4-phosphate and phosphoenolpyruvate: step 6/7. In terms of biological role, catalyzes the transfer of the enolpyruvyl moiety of phosphoenolpyruvate (PEP) to the 5-hydroxyl of shikimate-3-phosphate (S3P) to produce enolpyruvyl shikimate-3-phosphate and inorganic phosphate. This Haemophilus influenzae (strain PittGG) protein is 3-phosphoshikimate 1-carboxyvinyltransferase.